The chain runs to 207 residues: Dephospho-CoA kinase (207 aa).

Residues Val-4–Tyr-203 form the DPCK domain. Ala-12–Thr-17 contributes to the ATP binding site.

Belongs to the CoaE family.

The protein localises to the cytoplasm. The enzyme catalyses 3'-dephospho-CoA + ATP = ADP + CoA + H(+). It functions in the pathway cofactor biosynthesis; coenzyme A biosynthesis; CoA from (R)-pantothenate: step 5/5. Catalyzes the phosphorylation of the 3'-hydroxyl group of dephosphocoenzyme A to form coenzyme A. This chain is Dephospho-CoA kinase, found in Staphylococcus aureus (strain MRSA252).